A 415-amino-acid polypeptide reads, in one-letter code: Gamma-glutamyl phosphate reductase (415 aa).

It belongs to the gamma-glutamyl phosphate reductase family.

It localises to the cytoplasm. The enzyme catalyses L-glutamate 5-semialdehyde + phosphate + NADP(+) = L-glutamyl 5-phosphate + NADPH + H(+). Its pathway is amino-acid biosynthesis; L-proline biosynthesis; L-glutamate 5-semialdehyde from L-glutamate: step 2/2. Its function is as follows. Catalyzes the NADPH-dependent reduction of L-glutamate 5-phosphate into L-glutamate 5-semialdehyde and phosphate. The product spontaneously undergoes cyclization to form 1-pyrroline-5-carboxylate. In Xylella fastidiosa (strain 9a5c), this protein is Gamma-glutamyl phosphate reductase.